The chain runs to 603 residues: UPF0313 protein MJ1155 (603 aa).

The Radical SAM core domain maps to 285 to 557 (GIVPVQFSVV…KIQKAICLYR (273 aa)). 3 residues coordinate [4Fe-4S] cluster: Cys299, Cys303, and Cys306.

This sequence belongs to the UPF0313 family. The cofactor is [4Fe-4S] cluster.

The sequence is that of UPF0313 protein MJ1155 from Methanocaldococcus jannaschii (strain ATCC 43067 / DSM 2661 / JAL-1 / JCM 10045 / NBRC 100440) (Methanococcus jannaschii).